The following is a 99-amino-acid chain: Small ribosomal subunit protein bS18 (99 aa).

The disordered stretch occupies residues 1–25 (MAESKGRPGSASQRPTGGDKAIAGQ).

This sequence belongs to the bacterial ribosomal protein bS18 family. In terms of assembly, part of the 30S ribosomal subunit. Forms a tight heterodimer with protein bS6.

In terms of biological role, binds as a heterodimer with protein bS6 to the central domain of the 16S rRNA, where it helps stabilize the platform of the 30S subunit. This is Small ribosomal subunit protein bS18 from Solibacter usitatus (strain Ellin6076).